Reading from the N-terminus, the 246-residue chain is PARP-type zinc finger-containing protein C2A9.07c (246 aa).

A PARP-type; degenerate zinc finger spans residues 8-99; the sequence is YRVELAKTGR…EKILRAFEQG (92 aa). Residues 103 to 126 show a composition bias toward basic and acidic residues; sequence EEDEERCRKMASDASEEKDRKIEE. A disordered region spans residues 103–246; sequence EEDEERCRKM…ESGNEYSDSD (144 aa). Threonine 130 is modified (phosphothreonine). At serine 131 the chain carries Phosphoserine. Residues 157 to 168 show a composition bias toward basic residues; that stretch reads NKKHKAERKRSP. Residues 175–184 are compositionally biased toward acidic residues; sequence LEDDEEIEDV. Basic and acidic residues predominate over residues 185-196; the sequence is ASDKDEEEKPWS. The span at 197–215 shows a compositional bias: acidic residues; it reads GDEEDDDELVVKDSEDETE. Residues serine 243 and serine 245 each carry the phosphoserine modification.

Its subcellular location is the nucleus. It localises to the mitochondrion. In Schizosaccharomyces pombe (strain 972 / ATCC 24843) (Fission yeast), this protein is PARP-type zinc finger-containing protein C2A9.07c.